Reading from the N-terminus, the 130-residue chain is Protein LLP homolog (130 aa).

Residues 1 to 21 (MAKSLRSKWKRKMRAEKRKKN) show a composition bias toward basic residues. 2 disordered regions span residues 1 to 23 (MAKS…KNAP) and 57 to 76 (QEKM…EKDD). Positions 10-78 (KRKMRAEKRK…GADEEKDDMK (69 aa)) form a coiled coil. Lysine 78 participates in a covalent cross-link: Glycyl lysine isopeptide (Lys-Gly) (interchain with G-Cter in SUMO2). Residues 104-124 (RQRKRLKAKREKKRGKSRAKA) are compositionally biased toward basic residues. The interval 104-130 (RQRKRLKAKREKKRGKSRAKAAKGLAW) is disordered.

It belongs to the learning-associated protein family. As to quaternary structure, interacts with CTCF, MYO1C and with the transcriptional machinery, including RNA polymerase II and TBP. As to expression, widely expressed, with high levels in testis and spleen and low levels in heart. In the brain, expressed in the cortex and hippocampus, and at very low levels in the cerebellum.

The protein resides in the nucleus. It is found in the nucleolus. Its subcellular location is the chromosome. In hippocampal neurons, regulates dendritic and spine growth and synaptic transmission. The chain is Protein LLP homolog (Llph) from Mus musculus (Mouse).